Here is a 141-residue protein sequence, read N- to C-terminus: Putative 8-oxo-dGTP diphosphatase 2 (141 aa).

Residues 2–131 (LNQIVVAGAI…WIADLARTLN (130 aa)) enclose the Nudix hydrolase domain. Mg(2+)-binding residues include glycine 37, glutamate 52, glutamate 55, and glutamate 56. The short motif at 37–58 (GKVAAGETERAALARELAEELG) is the Nudix box element.

Belongs to the Nudix hydrolase family. The cofactor is Mg(2+). Requires Mn(2+) as cofactor.

It catalyses the reaction 8-oxo-dGTP + H2O = 8-oxo-dGMP + diphosphate + H(+). In terms of biological role, may be involved in the GO system responsible for removing an oxidatively damaged form of guanine (7,8-dihydro-8-oxoguanine, 8-oxo-dGTP) from DNA and the nucleotide pool. 8-oxo-dGTP is inserted opposite dA and dC residues of template DNA with almost equal efficiency thus leading to A.T to G.C transversions. MutT specifically degrades 8-oxo-dGTP to the monophosphate. In Mycobacterium tuberculosis (strain CDC 1551 / Oshkosh), this protein is Putative 8-oxo-dGTP diphosphatase 2 (mutT2).